Consider the following 1218-residue polypeptide: Coatomer subunit alpha-2 (1218 aa).

8 WD repeats span residues 7-48 (TKSN…DRFD), 49-88 (EHEGPVRGVHFHNSQPLFVSGGDDYKIKVWNYKTHRCLFT), 91-132 (GHLD…SVLT), 133-172 (GHNHYVMCASFHPKEDLVVSASLDQTVRVWDIGALKKKSA), 202-241 (GHDRGVNWASFHPTLPLIVSGADDRQVKLWRMNETKAWEV), 246-285 (GHMNNVSSVMFHAKQDIIVSNSEDKSIRVWDATKRTGIQT), 288-326 (REHDRFWILAVHPEINLLAAGHDNGMIVFKLERERPAFA), and 363-404 (SLNQ…VGRS). The segment at 826 to 849 (NRGAVDEEEEDVEGDWGEGLDKFD) is disordered. Over residues 831-843 (DEEEEDVEGDWGE) the composition is skewed to acidic residues.

As to quaternary structure, oligomeric complex that consists of at least the alpha, beta, beta', gamma, delta, epsilon and zeta subunits.

The protein localises to the cytoplasm. The protein resides in the golgi apparatus membrane. It is found in the cytoplasmic vesicle. Its subcellular location is the COPI-coated vesicle membrane. In terms of biological role, the coatomer is a cytosolic protein complex that binds to dilysine motifs and reversibly associates with Golgi non-clathrin-coated vesicles, which further mediate biosynthetic protein transport from the ER, via the Golgi up to the trans Golgi network. Coatomer complex is required for budding from Golgi membranes, and is essential for the retrograde Golgi-to-ER transport of dilysine-tagged proteins. The sequence is that of Coatomer subunit alpha-2 from Arabidopsis thaliana (Mouse-ear cress).